Reading from the N-terminus, the 147-residue chain is Ubiquitin-conjugating enzyme E2 D3 (147 aa).

The UBC core domain maps to 1 to 147; that stretch reads MALKRINKEL…SREWTQKYAM (147 aa). A disulfide bond links Cys21 and Cys107. Cys85 serves as the catalytic Glycyl thioester intermediate.

It belongs to the ubiquitin-conjugating enzyme family. In terms of assembly, interacts with SCF (SKP1-CUL1-F-box protein) E3 ubiquitin ligase complex; when Cullin is neddylated, the interaction between the E2 and the SCF complex is strengthened. Interacts with DAPK3. Interacts with BRCA1; the DNA damage checkpoint promotes the association with BRCA1 after ionizing radiation. Interacts non-covalently with ubiquitin. Interacts with E3 ubiquitin-protein ligase CBLC. Interacts with UBTD1. Interacts with RIGI and RNF135; involved in RIGI ubiquitination and activation. In terms of processing, phosphorylated by AURKB.

It localises to the cell membrane. The protein localises to the endosome membrane. The enzyme catalyses S-ubiquitinyl-[E1 ubiquitin-activating enzyme]-L-cysteine + [E2 ubiquitin-conjugating enzyme]-L-cysteine = [E1 ubiquitin-activating enzyme]-L-cysteine + S-ubiquitinyl-[E2 ubiquitin-conjugating enzyme]-L-cysteine.. It catalyses the reaction S-ubiquitinyl-[E1 ubiquitin-activating enzyme]-L-cysteine + [acceptor protein]-L-lysine = [E1 ubiquitin-activating enzyme]-L-cysteine + N(6)-monoubiquitinyl-[acceptor protein]-L-lysine.. The protein operates within protein modification; protein ubiquitination. Accepts ubiquitin from the E1 complex and catalyzes its covalent attachment to other proteins. In vitro catalyzes 'Lys-11'-, as well as 'Lys-48'-linked polyubiquitination. Cooperates with the E2 CDC34 and the SCF(FBXW11) E3 ligase complex for the polyubiquitination of NFKBIA leading to its subsequent proteasomal degradation. Acts as an initiator E2, priming the phosphorylated NFKBIA target at positions 'Lys-21' and/or 'Lys-22' with a monoubiquitin. Ubiquitin chain elongation is then performed by CDC34, building ubiquitin chains from the UBE2D3-primed NFKBIA-linked ubiquitin. Also acts as an initiator E2, in conjunction with RNF8, for the priming of PCNA. Monoubiquitination of PCNA, and its subsequent polyubiquitination, are essential events in the operation of the DNA damage tolerance (DDT) pathway that is activated after DNA damage caused by UV or chemical agents during S-phase. Associates with the BRCA1/BARD1 E3 ligase complex to perform ubiquitination at DNA damage sites following ionizing radiation leading to DNA repair. Targets DAPK3 for ubiquitination which influences promyelocytic leukemia protein nuclear body (PML-NB) formation in the nucleus. In conjunction with the MDM2 and TOPORS E3 ligases, functions ubiquitination of p53/TP53. In conjunction with the CBL E3 ligase, targets EGFR for polyubiquitination at the plasma membrane as well as during its internalization and transport on endosomes. In conjunction with the STUB1 E3 quality control E3 ligase, ubiquitinates unfolded proteins to catalyze their immediate destruction. Together with RNF135, catalyzes the viral RNA-dependent 'Lys-63'-linked polyubiquitination of RIGI to activate the downstream signaling pathway that leads to interferon beta production. Together with ZNF598, catalyzes ubiquitination of 40S ribosomal proteins in response to ribosome collisions. In cooperation with the GATOR2 complex, catalyzes 'Lys-6'-linked ubiquitination of NPRL2. This is Ubiquitin-conjugating enzyme E2 D3 (UBE2D3) from Homo sapiens (Human).